Reading from the N-terminus, the 1134-residue chain is Vinculin (1134 aa).

Residues 1–835 form an N-terminal globular head region; sequence MPVFHTRTIE…GAVAKVREAF (835 aa). Phosphoserine is present on Ser-97. A talin-interaction region spans residues 168–208; that stretch reads MTKMAKMIDERQQELTHQEHRVMLVNSMNTVKELLPVLISA. Residue Lys-173 is modified to N6-acetyllysine. 3 repeat units span residues 259 to 369, 370 to 479, and 480 to 589. Residues 259–589 form a 3 X 112 AA tandem repeats region; the sequence is ASKDTEAMKR…LKDLKARMQE (331 aa). Ser-260, Ser-272, Ser-275, Ser-288, Ser-290, Ser-346, and Ser-434 each carry phosphoserine. Lys-496 carries the N6-acetyllysine modification. Tyr-537 is subject to Phosphotyrosine. 3 positions are modified to phosphoserine: Ser-574, Ser-579, and Ser-600. Residues Thr-604 and Thr-672 each carry the phosphothreonine modification. The residue at position 721 (Ser-721) is a Phosphoserine. Positions 741 to 764 are interaction with ACTN4; that stretch reads MANIQPQMLVAGATSIARRANRIL. Phosphoserine is present on residues Ser-795 and Ser-809. At Tyr-822 the chain carries Phosphotyrosine. The segment at 836-878 is linker (Pro-rich); it reads QPQEPDFPPPPPDLEQLRLTDELAPPKPPLPEGEVPPPRPPPP. Positions 857-887 are disordered; that stretch reads ELAPPKPPLPEGEVPPPRPPPPEEKDEEFPE. Over residues 860–876 the composition is skewed to pro residues; sequence PPKPPLPEGEVPPPRPP. The interval 879–1134 is C-terminal tail; it reads EEKDEEFPEQ…RWVRKTPWYQ (256 aa). Facilitates phospholipid membrane insertion stretches follow at residues 1003-1046 and 1120-1134; these read RLVR…KRIR and AGFTLRWVRKTPWYQ. Tyr-1133 bears the Phosphotyrosine; by SRC-type Tyr-kinases mark.

This sequence belongs to the vinculin/alpha-catenin family. As to quaternary structure, exhibits self-association properties. Part of a complex composed of THSD1, PTK2/FAK1, TLN1 and VCL. Interacts with APBB1IP and NRAP. Interacts with TLN1. Interacts with CTNNB1 and this interaction is necessary for its localization to the cell-cell junctions and for its function in regulating cell surface expression of E-cadherin. Interacts with SYNM. Interacts with SORBS1. Interacts with CTNNA1. Binds to ACTN4; this interaction triggers conformational changes. Interacts with FLII. In terms of assembly, (Microbial infection) Interacts via its globular head domain with the central portion of S.flexneri IcsA (also called VirG). Post-translationally, phosphorylated; on serines, threonines and tyrosines. Phosphorylation on Tyr-1133 in activated platelets affects head-tail interactions and cell spreading but has no effect on actin binding nor on localization to focal adhesion plaques. Acetylated; mainly by myristic acid but also by a small amount of palmitic acid. Metavinculin is muscle-specific.

Its subcellular location is the cell membrane. It is found in the cell junction. The protein resides in the adherens junction. The protein localises to the focal adhesion. It localises to the cytoplasm. Its subcellular location is the cytoskeleton. It is found in the sarcolemma. The protein resides in the cell projection. The protein localises to the podosome. Functionally, actin filament (F-actin)-binding protein involved in cell-matrix adhesion and cell-cell adhesion. Regulates cell-surface E-cadherin expression and potentiates mechanosensing by the E-cadherin complex. May also play important roles in cell morphology and locomotion. The chain is Vinculin (VCL) from Homo sapiens (Human).